Here is a 742-residue protein sequence, read N- to C-terminus: MAQYTVDSFIVELGFSEKVVKGLQRVEKMSMQAAQRIERNINKAFDVKPNKSSQEALNRIVKNAQSASGRINKALNSSFNLDSQGVKSLKKLETQAKKTAKGINKSLKDAMKVDGKITIKTGRGRGGQSIPPVGGGAPRGQRVDVAQRQMERMFNNNFYSGLTRRLETIGGQGNQMAASFRGSLQNIYNRYKGTGKVGEYEMEVKKLIDVTKRWVIAENARLKSVKESAWLQDRANASLRQLVGGFVSAYALLELSQKTIEAGVKRQSAQLASTAIFGADTQQARMFAASFAHQIGQNYTDTMKQYSNFAAGAQPTLGFQGTQEFYKNAAMFARIRGATDEDLKGIMVAFQQMASKGKIQAEELRGQLGDRLAGAVQLFADAIGKTPQELDKLMKDGKLLAQDVLPKVSERMAELVKQAGGMNAVSKQTATSMGQAKAMWDNTLVALFNNSSEGISQLSNSVAMFLQGSMGSTQALGLVIGNLLKGAGNLLDFVTDFMYRTSALYYYARAWYKDLDNSQQKLIKSAGEFLGTVVTIGGAVAVVSKSVKLLSGLVGGGIFGKILQRLGVSAAGTAAAGEAAAAAGGVTATRMALGTVGSALMLRGSTDPNAAKNYSEVTLPKPFENAVANITNPKRPMFFDENGQLQFAQYTQDVEGNRKLIDNGLSNWEIIMEKLSTSIDNFANKFNQTPMMMTPSGLPMQTKQTLNVTFNLDGKQIATKMVDITDKNQEDILLSSSYPEEE.

A disordered region spans residues 120 to 140 (KTGRGRGGQSIPPVGGGAPRG).

This sequence belongs to the Mulikevirus tape measure protein family.

Functionally, serves as a base for tail tube protein polymerization and acts as a template for tail length determination. The chain is Probable tape measure protein from Salmonella phage Felix O1 (isolate Felix O1-VT1) (Bacteriophage Felix O1).